The following is a 395-amino-acid chain: ADP-ribosylation factor-like protein 13A (395 aa).

GTP-binding positions include 28–35, 71–75, and 130–133; these read GLDNSGKS, DLTGD, and NKQD.

Belongs to the small GTPase superfamily. Arf family.

This Rattus norvegicus (Rat) protein is ADP-ribosylation factor-like protein 13A (Arl13a).